Reading from the N-terminus, the 282-residue chain is Bifunctional protein FolD (282 aa).

Residues G166–S168 and I232 contribute to the NADP(+) site.

It belongs to the tetrahydrofolate dehydrogenase/cyclohydrolase family. In terms of assembly, homodimer.

It carries out the reaction (6R)-5,10-methylene-5,6,7,8-tetrahydrofolate + NADP(+) = (6R)-5,10-methenyltetrahydrofolate + NADPH. It catalyses the reaction (6R)-5,10-methenyltetrahydrofolate + H2O = (6R)-10-formyltetrahydrofolate + H(+). It functions in the pathway one-carbon metabolism; tetrahydrofolate interconversion. Its function is as follows. Catalyzes the oxidation of 5,10-methylenetetrahydrofolate to 5,10-methenyltetrahydrofolate and then the hydrolysis of 5,10-methenyltetrahydrofolate to 10-formyltetrahydrofolate. This chain is Bifunctional protein FolD, found in Haemophilus influenzae (strain PittEE).